The primary structure comprises 3256 residues: Proliferation marker protein Ki-67 (3256 aa).

The 50-residue stretch at 27 to 76 (CLFGRGIECDIRIQLPVVSKQHCKIEIHEQEAILHNFSSTNPTQVNGSVI) folds into the FHA domain. The interval 101-199 (SLQNGRKSTE…RNGRNAADPI (99 aa)) is disordered. Over residues 107–122 (KSTEFPRKIREQEPAR) the composition is skewed to basic and acidic residues. A phosphoserine mark is found at Ser-125, Ser-128, and Ser-166. Over residues 161–173 (NVKEDSTADDSKD) the composition is skewed to basic and acidic residues. A compositionally biased stretch (polar residues) spans 174 to 183 (SVAQGTTNVH). A Glycyl lysine isopeptide (Lys-Gly) (interchain with G-Cter in SUMO2) cross-link involves residue Lys-245. Phosphoserine occurs at positions 264, 296, and 308. Disordered stretches follow at residues 271 to 426 (ATEK…RGSI) and 513 to 542 (RPEL…LVMH). Residues 314-324 (DQNKGKGRDVE) show a composition bias toward basic and acidic residues. Phosphothreonine is present on residues Thr-328 and Thr-347. Positions 349–358 (VQYSQQQNSP) are enriched in polar residues. A phosphoserine mark is found at Ser-352, Ser-357, and Ser-374. A Phosphothreonine modification is found at Thr-401. Ser-411 is modified (phosphoserine). The span at 414-425 (KPENLSSKTRGS) shows a compositional bias: polar residues. Residues 495 to 678 (ESEGIPLKRR…AKQTQTKVIK (184 aa)) form a positively charged patch (CP) region. The region spanning 502–549 (KRRRVSFGGHLRPELFDENLPPNTPLKRGEAPTKRKSLVMHTPPVLKK) is the PP1-binding domain. The residue at position 538 (Ser-538) is a Phosphoserine. Thr-543 carries the phosphothreonine modification. The segment at 575–632 (SLVISPPAPSPRKTPVASDQRRRSCKTAPASSSKSQTEVPKRGGRKSGNLPSKRVSIS) is disordered. Phosphoserine is present on residues Ser-579 and Ser-584. The segment covering 603–612 (PASSSKSQTE) has biased composition (polar residues). Ser-648 carries the phosphoserine modification. The segment at 674–707 (TKVIKHGPQRSMNKRQRRPATPKKPVGEVHSQFS) is disordered. Residues 676–694 (VIKHGPQRSMNKRQRRPAT) are compositionally biased toward basic residues. Thr-761 bears the Phosphothreonine mark. The interval 853–886 (SLETKTSDTETEPSKTVSTANRSGRSTEFRNIQK) is disordered. Phosphoserine is present on Ser-859. Polar residues predominate over residues 866–882 (SKTVSTANRSGRSTEFR). The 16 X 122 AA approximate repeats stretch occupies residues 1000–2928 (GKITKMPCQS…ASFQELSQTP (1929 aa)). 6 K167R repeats span residues 1001-1112 (KITK…FQTP), 1123-1234 (KTTK…FQTP), 1245-1356 (KTTK…FQTP), 1367-1477 (KTTK…FQTP), 1488-1597 (KTTK…LFQT), and 1609-1720 (KTAK…FQTP). Thr-1017 carries the post-translational modification Phosphothreonine. Residues Lys-1022 and Lys-1035 each participate in a glycyl lysine isopeptide (Lys-Gly) (interchain with G-Cter in SUMO2) cross-link. The segment at 1045-1073 (TRTSGETTHTHREPAGDGKSIRTFKESPK) is disordered. A compositionally biased stretch (basic and acidic residues) spans 1052–1072 (THTHREPAGDGKSIRTFKESP). Position 1071 is a phosphoserine (Ser-1071). At Thr-1091 the chain carries Phosphothreonine. Lys-1093 is covalently cross-linked (Glycyl lysine isopeptide (Lys-Gly) (interchain with G-Cter in SUMO1); alternate). Residue Lys-1093 forms a Glycyl lysine isopeptide (Lys-Gly) (interchain with G-Cter in SUMO2); alternate linkage. A Phosphoserine modification is found at Ser-1098. Positions 1109-1151 (FQTPGPSEESMTDEKTTKIACKSPPPESVDTPTSTKQWPKRSL) are disordered. The residue at position 1111 (Thr-1111) is a Phosphothreonine. Ser-1131 is subject to Phosphoserine. Thr-1139 carries the post-translational modification Phosphothreonine. Residue Ser-1142 is modified to Phosphoserine. A Phosphothreonine modification is found at Thr-1167. Ser-1169 is modified (phosphoserine). At Thr-1176 the chain carries Phosphothreonine. Residues Lys-1185 and Lys-1188 each participate in a glycyl lysine isopeptide (Lys-Gly) (interchain with G-Cter in SUMO2) cross-link. Thr-1193 is subject to Phosphothreonine. At Ser-1207 the chain carries Phosphoserine. Phosphothreonine is present on Thr-1233. Residues 1246–1276 (TTKIPCDSPQSDPVDTPTSTKQRPKRSIRKA) are disordered. 2 positions are modified to phosphoserine: Ser-1253 and Ser-1256. Positions 1253–1266 (SPQSDPVDTPTSTK) are enriched in polar residues. A phosphothreonine mark is found at Thr-1261, Thr-1298, Thr-1315, and Thr-1327. Residues 1323–1518 (TENLTGSKRR…PQSKRSLRKV (196 aa)) form a disordered region. Ser-1329 carries the post-translational modification Phosphoserine. Residue Thr-1335 is modified to Phosphothreonine. Lys-1337 participates in a covalent cross-link: Glycyl lysine isopeptide (Lys-Gly) (interchain with G-Cter in SUMO2). The residue at position 1355 (Thr-1355) is a Phosphothreonine. Residue Ser-1376 is modified to Phosphoserine. Position 1383 is a phosphothreonine (Thr-1383). At Ser-1386 the chain carries Phosphoserine. Composition is skewed to basic and acidic residues over residues 1394–1406 (PLEK…ELSA) and 1418–1442 (THTD…KQKL). Phosphothreonine is present on residues Thr-1420 and Thr-1437. Phosphoserine is present on Ser-1496. At Thr-1503 the chain carries Phosphothreonine. Ser-1506 is subject to Phosphoserine. Phosphothreonine is present on Thr-1540. Tyr-1552 is modified (phosphotyrosine). A phosphothreonine mark is found at Thr-1557 and Thr-1569. A phosphoserine mark is found at Ser-1571 and Ser-1617. A disordered region spans residues 1597–1675 (TRGHTEESMT…PTGDGKSMKA (79 aa)). Position 1639 is an N6-acetyllysine (Lys-1639). Lys-1643 is covalently cross-linked (Glycyl lysine isopeptide (Lys-Gly) (interchain with G-Cter in SUMO2)). Over residues 1660 to 1672 (THTHTEPTGDGKS) the composition is skewed to basic and acidic residues. Residues Ser-1679 and Ser-1689 each carry the phosphoserine modification. 5 disordered regions span residues 1689-1708 (SLTG…EVPE), 1717-1765 (FQTP…ADTE), 1771-1790 (FRKQ…PAVG), 1801-1824 (TPVQ…TRKE), and 1839-1886 (FQTP…KADV). A Glycyl lysine isopeptide (Lys-Gly) (interchain with G-Cter in SUMO2) cross-link involves residue Lys-1703. Residue Thr-1719 is modified to Phosphothreonine. Ser-1721 carries the phosphoserine modification. Basic and acidic residues predominate over residues 1722–1733 (HTKESMTNEKTT). K167R repeat units follow at residues 1731-1842 (KTTK…FQTP), 1854-1964 (TKKI…FQTP), 1975-2086 (KITE…FQTP), 2097-2204 (KTTK…FQTP), and 2215-2326 (KTTK…FQTP). Residue Ser-1740 is modified to Phosphoserine. Phosphothreonine is present on residues Thr-1747, Thr-1764, Thr-1784, and Thr-1801. Ser-1815 carries the phosphoserine modification. Thr-1841 is modified (phosphothreonine). A phosphoserine mark is found at Ser-1861 and Ser-1864. The span at 1861-1874 (SPQSDPADTPTNTK) shows a compositional bias: polar residues. Thr-1869, Thr-1897, Thr-1906, and Thr-1923 each carry phosphothreonine. Ser-1937 carries the phosphoserine modification. The disordered stretch occupies residues 1961 to 2002 (FQTPGHTEESMTDDKITEVSCKSPQPDPVKTPTSSKQRLKIS). A Phosphothreonine modification is found at Thr-1963. Residues 1966–1977 (HTEESMTDDKIT) show a composition bias toward basic and acidic residues. At Ser-1983 the chain carries Phosphoserine. Lys-2005 is modified (N6-acetyllysine). A Glycyl lysine isopeptide (Lys-Gly) (interchain with G-Cter in SUMO1); alternate cross-link involves residue Lys-2009. A Glycyl lysine isopeptide (Lys-Gly) (interchain with G-Cter in SUMO2); alternate cross-link involves residue Lys-2009. A disordered region spans residues 2017 to 2192 (KLTQTSGKTT…TPKGKAQPLE (176 aa)). 2 positions are modified to phosphothreonine: Thr-2028 and Thr-2065. 2 stretches are compositionally biased toward basic and acidic residues: residues 2028-2046 (THRE…KESA) and 2061-2070 (RWPRTPKEEA). Lys-2067 participates in a covalent cross-link: Glycyl lysine isopeptide (Lys-Gly) (interchain with G-Cter in SUMO1); alternate. A Glycyl lysine isopeptide (Lys-Gly) (interchain with G-Cter in SUMO2); alternate cross-link involves residue Lys-2067. The residue at position 2072 (Ser-2072) is a Phosphoserine. Phosphothreonine is present on Thr-2085. A compositionally biased stretch (basic and acidic residues) spans 2087–2099 (DHTEESTTDDKTT). The residue at position 2105 (Ser-2105) is a Phosphoserine. Position 2113 is a phosphothreonine (Thr-2113). 2 positions are modified to phosphoserine: Ser-2116 and Ser-2135. Positions 2145–2168 (HTDKVPGDEDKGINVFRETAKQKL) are enriched in basic and acidic residues. 3 positions are modified to phosphothreonine: Thr-2146, Thr-2163, and Thr-2203. The segment at 2205–2400 (ICTDKPTTHE…KPAVSDEKNI (196 aa)) is disordered. Ser-2223 carries the post-translational modification Phosphoserine. A phosphothreonine mark is found at Thr-2231 and Thr-2233. A Phosphoserine modification is found at Ser-2239. Thr-2259 carries the post-translational modification Phosphothreonine. Ser-2261 is modified (phosphoserine). Phosphothreonine is present on residues Thr-2268, Thr-2285, Thr-2325, Thr-2328, and Thr-2333. K167R repeat units lie at residues 2336–2447 (KTTK…FQTP), 2458–2569 (KITE…FSAP), 2580–2688 (KNTK…LSET), 2700–2805 (KATK…GFKD), and 2819–2928 (KTTK…SQTP). Residue Ser-2344 is modified to Phosphoserine. Residues Thr-2352 and Thr-2389 each carry the phosphothreonine modification. Residue Ser-2395 is modified to Phosphoserine. At Thr-2406 the chain carries Phosphothreonine. Ser-2420 is subject to Phosphoserine. Thr-2426 and Thr-2446 each carry phosphothreonine. A disordered region spans residues 2445 to 2480 (QTPGHTEESMTDDKITEVSCKSPQPESFKTSRSSKQ). Basic and acidic residues predominate over residues 2449 to 2460 (HTEESMTDDKIT). Positions 2463–2475 (SCKSPQPESFKTS) are enriched in polar residues. A Phosphoserine modification is found at Ser-2466. Lys-2492 participates in a covalent cross-link: Glycyl lysine isopeptide (Lys-Gly) (interchain with G-Cter in SUMO1). Positions 2497–2521 (AVSKLTRTSGETTQTHTEPTGDSKS) are disordered. Over residues 2501 to 2514 (LTRTSGETTQTHTE) the composition is skewed to polar residues. Residues Ser-2505, Ser-2528, and Ser-2588 each carry the phosphoserine modification. The disordered stretch occupies residues 2570–3256 (GHTEESMTID…TRSHRDSEDI (687 aa)). 3 stretches are compositionally biased toward basic and acidic residues: residues 2609–2618 (RKEVKEELSA), 2632–2644 (THKE…EGIK), and 2660–2675 (EPSR…KAQP). A Glycyl lysine isopeptide (Lys-Gly) (interchain with G-Cter in SUMO1); alternate cross-link involves residue Lys-2613. Lys-2613 is covalently cross-linked (Glycyl lysine isopeptide (Lys-Gly) (interchain with G-Cter in SUMO2); alternate). A Phosphoserine modification is found at Ser-2638. Residues 2685 to 2696 (LSETSGHTQESL) show a composition bias toward polar residues. Ser-2708 carries the phosphoserine modification. Lys-2734 is covalently cross-linked (Glycyl lysine isopeptide (Lys-Gly) (interchain with G-Cter in SUMO1); alternate). Lys-2734 participates in a covalent cross-link: Glycyl lysine isopeptide (Lys-Gly) (interchain with G-Cter in SUMO2); alternate. Composition is skewed to basic and acidic residues over residues 2751–2770 (DADK…KESA) and 2810–2821 (HTEESMTDDKTT). Residues Ser-2827, Ser-2828, and Ser-2838 each carry the phosphoserine modification. A Glycyl lysine isopeptide (Lys-Gly) (interchain with G-Cter in SUMO1); alternate cross-link involves residue Lys-2852. A Glycyl lysine isopeptide (Lys-Gly) (interchain with G-Cter in SUMO2); alternate cross-link involves residue Lys-2852. Basic and acidic residues predominate over residues 2869–2881 (THTDKEPVGEGKG). Polar residues predominate over residues 2941-2951 (SFTSAPKQTPD). Lys-2967 participates in a covalent cross-link: Glycyl lysine isopeptide (Lys-Gly) (interchain with G-Cter in SUMO2). Residues 2982–2991 (KSQSKSNTSL) are compositionally biased toward polar residues. Position 2986 is an N6-acetyllysine (Lys-2986). Over residues 3029 to 3039 (KKQRVAPRARG) the composition is skewed to basic residues. 3034–3041 (APRARGKS) is a binding site for ATP. At Ser-3041 the chain carries Phosphoserine. Basic and acidic residues-rich tracts occupy residues 3071–3080 (KTNKEEHKLQ) and 3113–3124 (ERIEINRNEKKP). Ser-3128 carries the post-translational modification Phosphoserine. A compositionally biased stretch (basic and acidic residues) spans 3138 to 3154 (DGARKPIPRDKVTENKR). A compositionally biased stretch (polar residues) spans 3207 to 3223 (SQPAASTLESKSVQRVT). Positions 3228–3241 (RCAENPKKAEDNVC) are enriched in basic and acidic residues.

In terms of assembly, interacts with KIF15. Interacts (via the FHA domain) with NIFK. Interacts with PPP1CC. Component of a complex at least composed of ZNF335, HCFC1, CCAR2, EMSY, MKI67, RBBP5, ASH2L and WDR5; the complex is formed as a result of interactions between components of a nuclear receptor-mediated transcription complex and a histone methylation complex. Interacts with ZNF335. In terms of processing, hyperphosphorylated by CDK1 in mitosis; hyperphosphorylatiom prevents undergoing liquid-liquid phase separation. Dephosphorylated by PPP1CC at the onset of anaphase. Dephosphorylated by protein phosphatase 2A (PP2A) at the onset of anaphase. Dephosphorylation by protein phosphatase 2A (PP2A) and simultaneous exposure of the positively charged patch (CP) during mitotic exit induce the RNA-dependent formation of a liquid-like condensed phase on the chromosome surface. Ubiquitinated by the APC/C complex after neuronal progenitors exit mitosis during brain development, leading to clearance from constitutive heterochromatin.

It is found in the chromosome. It localises to the nucleus. The protein localises to the nucleolus. In terms of biological role, protein that associates with the surface of mitotic chromosomes and acts both as a chromosome repellent during early mitosis and chromosome attractant during late mitosis. Required to maintain individual mitotic chromosomes dispersed in the cytoplasm following nuclear envelope disassembly. During early mitosis, relocalizes from nucleoli to the chromosome surface where it forms extended brush structures that cover a substantial fraction of the chromosome surface. The MKI67 brush structure prevents chromosomes from collapsing into a single chromatin mass by forming a steric and electrostatic charge barrier: the protein has a high net electrical charge and acts as a surfactant, dispersing chromosomes and enabling independent chromosome motility. During mitotic anaphase, the MKI67 brush structure collapses and MKI67 switches from a chromosome repellent to a chromosome attractant to promote chromosome clustering and facilitate the exclusion of large cytoplasmic particles from the future nuclear space. Mechanistically, dephosphorylation during mitotic exit and simultaneous exposure of a conserved basic patch induce the RNA-dependent formation of a liquid-like condensed phase on the chromosome surface, promoting coalescence of neighboring chromosome surfaces and clustering of chromosomes. Binds premature ribosomal RNAs during anaphase; promoting liquid-liquid phase separation. Binds DNA, with a preference for supercoiled DNA and AT-rich DNA. Does not contribute to the internal structure of mitotic chromosomes. May play a role in chromatin organization; it is however unclear whether it plays a direct role in chromatin organization or whether it is an indirect consequence of its function in mitotic chromosome. The chain is Proliferation marker protein Ki-67 from Homo sapiens (Human).